A 645-amino-acid polypeptide reads, in one-letter code: Threonine--tRNA ligase (645 aa).

The region spanning 1–61 (MPVITLPDGS…SDDAKLSIIT (61 aa)) is the TGS domain. The tract at residues 243 to 534 (DHRKLGKKLD…LIEDTEGAFP (292 aa)) is catalytic. The Zn(2+) site is built by Cys334, His385, and His511.

The protein belongs to the class-II aminoacyl-tRNA synthetase family. Homodimer. Zn(2+) serves as cofactor.

The protein localises to the cytoplasm. It carries out the reaction tRNA(Thr) + L-threonine + ATP = L-threonyl-tRNA(Thr) + AMP + diphosphate + H(+). Its function is as follows. Catalyzes the attachment of threonine to tRNA(Thr) in a two-step reaction: L-threonine is first activated by ATP to form Thr-AMP and then transferred to the acceptor end of tRNA(Thr). Also edits incorrectly charged L-seryl-tRNA(Thr). The sequence is that of Threonine--tRNA ligase from Marinomonas sp. (strain MWYL1).